The following is a 455-amino-acid chain: Fumarate hydratase class II (455 aa).

Substrate-binding positions include 96–98, 122–125, 132–134, and T180; these read SGT, HPND, and SSN. The Proton donor/acceptor role is filled by H181. The active site involves S311. Substrate contacts are provided by residues S312 and 317-319; that span reads KVN.

The protein belongs to the class-II fumarase/aspartase family. Fumarase subfamily. In terms of assembly, homotetramer.

It localises to the cytoplasm. It carries out the reaction (S)-malate = fumarate + H2O. It participates in carbohydrate metabolism; tricarboxylic acid cycle; (S)-malate from fumarate: step 1/1. Its function is as follows. Involved in the TCA cycle. Catalyzes the stereospecific interconversion of fumarate to L-malate. This is Fumarate hydratase class II from Listeria monocytogenes serovar 1/2a (strain ATCC BAA-679 / EGD-e).